The primary structure comprises 131 residues: Actin-associated protein FAM107A (131 aa).

Residues 57–77 are a coiled coil; sequence VLEHRRRNQLIKKKEEELEAK. Residues 61–71 carry the Nuclear localization signal motif; the sequence is RRRNQLIKKKE.

In terms of assembly, interacts with ACTB. Interacts with COMMD1; this interaction stabilizes COMMD1 in the nucleus. Interacts with MAP1A. Interacts with PRDX1. Interacts with F-actin.

It is found in the nucleus. The protein localises to the cytoplasm. It localises to the cytoskeleton. The protein resides in the stress fiber. Its subcellular location is the cell junction. It is found in the focal adhesion. The protein localises to the cell projection. It localises to the ruffle membrane. The protein resides in the synapse. Its function is as follows. Stress-inducible actin-binding protein that plays a role in synaptic and cognitive functions by modulating actin filamentous (F-actin) dynamics. Mediates polymerization of globular actin to F-actin. Also binds to, stabilizes and bundles F-actin. Involved in synaptic function by regulating neurite outgrowth in an actin-dependent manner and for the acquisition of hippocampus-dependent cognitive function, such as learning and long-term memory. Plays a role in the actin and microtubule cytoskeleton organization; negatively regulates focal adhesion (FA) assembly promoting malignant glial cell migration in an actin-, microtubule- and MAP1A-dependent manner. Also involved in neuroblastoma G1/S phase cell cycle progression and cell proliferation inhibition by stimulating ubiquitination of NF-kappa-B subunit RELA and NF-kappa-B degradation in a COMMD1- and actin-dependent manner. May play a role in tumor development. The polypeptide is Actin-associated protein FAM107A (Rattus norvegicus (Rat)).